We begin with the raw amino-acid sequence, 1204 residues long: Integrator complex subunit 2 (1204 aa).

The helical transmembrane segment at 428 to 444 (FVSLSFCMLLAFSTLVS) threads the bilayer.

Belongs to the Integrator subunit 2 family. Component of the Integrator complex, composed of core subunits INTS1, INTS2, INTS3, INTS4, INTS5, INTS6, INTS7, INTS8, INTS9/RC74, INTS10, INTS11/CPSF3L, INTS12, INTS13, INTS14 and INTS15. The core complex associates with protein phosphatase 2A subunits PPP2CA and PPP2R1A, to form the Integrator-PP2A (INTAC) complex.

It localises to the nucleus. The protein localises to the nucleus membrane. The protein resides in the cytoplasm. Its function is as follows. Component of the integrator complex, a multiprotein complex that terminates RNA polymerase II (Pol II) transcription in the promoter-proximal region of genes. The integrator complex provides a quality checkpoint during transcription elongation by driving premature transcription termination of transcripts that are unfavorably configured for transcriptional elongation: the complex terminates transcription by (1) catalyzing dephosphorylation of the C-terminal domain (CTD) of Pol II subunit POLR2A/RPB1 and SUPT5H/SPT5, (2) degrading the exiting nascent RNA transcript via endonuclease activity and (3) promoting the release of Pol II from bound DNA. The integrator complex is also involved in terminating the synthesis of non-coding Pol II transcripts, such as enhancer RNAs (eRNAs), small nuclear RNAs (snRNAs), telomerase RNAs and long non-coding RNAs (lncRNAs). Mediates recruitment of cytoplasmic dynein to the nuclear envelope, probably as component of the integrator complex. In Homo sapiens (Human), this protein is Integrator complex subunit 2.